Reading from the N-terminus, the 39-residue chain is Cytochrome b559 subunit beta (39 aa).

Residues 14–30 (WLAIHGLAVPTVFFLGS) form a helical membrane-spanning segment. A heme-binding site is contributed by His-18.

Heterodimer of an alpha subunit and a beta subunit. PSII is composed of 1 copy each of membrane proteins PsbA, PsbB, PsbC, PsbD, PsbE, PsbF, PsbH, PsbI, PsbJ, PsbK, PsbL, PsbM, PsbT, PsbX, PsbY, PsbZ, Psb30/Ycf12, at least 3 peripheral proteins of the oxygen-evolving complex and a large number of cofactors. It forms dimeric complexes. The cofactor is heme b. In terms of processing, the N-terminus is blocked.

The protein localises to the plastid. Its subcellular location is the chloroplast thylakoid membrane. In terms of biological role, this b-type cytochrome is tightly associated with the reaction center of photosystem II (PSII). PSII is a light-driven water:plastoquinone oxidoreductase that uses light energy to abstract electrons from H(2)O, generating O(2) and a proton gradient subsequently used for ATP formation. It consists of a core antenna complex that captures photons, and an electron transfer chain that converts photonic excitation into a charge separation. This chain is Cytochrome b559 subunit beta, found in Spinacia oleracea (Spinach).